A 275-amino-acid chain; its full sequence is Diaminopimelate epimerase (275 aa).

Residues asparagine 12, glutamine 45, and asparagine 65 each coordinate substrate. The active-site Proton donor is cysteine 74. Substrate is bound by residues 75–76, asparagine 158, asparagine 191, and 209–210; these read GN and ER. Cysteine 218 functions as the Proton acceptor in the catalytic mechanism. Residue 219–220 coordinates substrate; that stretch reads GS.

The protein belongs to the diaminopimelate epimerase family. In terms of assembly, homodimer.

It localises to the cytoplasm. It carries out the reaction (2S,6S)-2,6-diaminopimelate = meso-2,6-diaminopimelate. Its pathway is amino-acid biosynthesis; L-lysine biosynthesis via DAP pathway; DL-2,6-diaminopimelate from LL-2,6-diaminopimelate: step 1/1. Functionally, catalyzes the stereoinversion of LL-2,6-diaminopimelate (L,L-DAP) to meso-diaminopimelate (meso-DAP), a precursor of L-lysine and an essential component of the bacterial peptidoglycan. The protein is Diaminopimelate epimerase of Shewanella amazonensis (strain ATCC BAA-1098 / SB2B).